Consider the following 319-residue polypeptide: Acetyl-coenzyme A carboxylase carboxyl transferase subunit alpha (319 aa).

The 255-residue stretch at 39–293 (KLEQKAAQLL…GDAIAEELKG (255 aa)) folds into the CoA carboxyltransferase C-terminal domain.

This sequence belongs to the AccA family. As to quaternary structure, acetyl-CoA carboxylase is a heterohexamer composed of biotin carboxyl carrier protein (AccB), biotin carboxylase (AccC) and two subunits each of ACCase subunit alpha (AccA) and ACCase subunit beta (AccD).

It is found in the cytoplasm. It catalyses the reaction N(6)-carboxybiotinyl-L-lysyl-[protein] + acetyl-CoA = N(6)-biotinyl-L-lysyl-[protein] + malonyl-CoA. The protein operates within lipid metabolism; malonyl-CoA biosynthesis; malonyl-CoA from acetyl-CoA: step 1/1. Functionally, component of the acetyl coenzyme A carboxylase (ACC) complex. First, biotin carboxylase catalyzes the carboxylation of biotin on its carrier protein (BCCP) and then the CO(2) group is transferred by the carboxyltransferase to acetyl-CoA to form malonyl-CoA. The chain is Acetyl-coenzyme A carboxylase carboxyl transferase subunit alpha from Parvibaculum lavamentivorans (strain DS-1 / DSM 13023 / NCIMB 13966).